The chain runs to 405 residues: Phosphopentomutase (405 aa).

Positions 10, 297, 302, 338, 339, and 350 each coordinate Mn(2+).

It belongs to the phosphopentomutase family. Requires Mn(2+) as cofactor.

It localises to the cytoplasm. It catalyses the reaction 2-deoxy-alpha-D-ribose 1-phosphate = 2-deoxy-D-ribose 5-phosphate. The catalysed reaction is alpha-D-ribose 1-phosphate = D-ribose 5-phosphate. The protein operates within carbohydrate degradation; 2-deoxy-D-ribose 1-phosphate degradation; D-glyceraldehyde 3-phosphate and acetaldehyde from 2-deoxy-alpha-D-ribose 1-phosphate: step 1/2. In terms of biological role, isomerase that catalyzes the conversion of deoxy-ribose 1-phosphate (dRib-1-P) and ribose 1-phosphate (Rib-1-P) to deoxy-ribose 5-phosphate (dRib-5-P) and ribose 5-phosphate (Rib-5-P), respectively. The polypeptide is Phosphopentomutase (Pseudoalteromonas translucida (strain TAC 125)).